A 92-amino-acid polypeptide reads, in one-letter code: Small ribosomal subunit protein uS19 (92 aa).

This sequence belongs to the universal ribosomal protein uS19 family.

Functionally, protein S19 forms a complex with S13 that binds strongly to the 16S ribosomal RNA. The protein is Small ribosomal subunit protein uS19 of Bradyrhizobium diazoefficiens (strain JCM 10833 / BCRC 13528 / IAM 13628 / NBRC 14792 / USDA 110).